The primary structure comprises 450 residues: L-lysine-epsilon aminotransferase (450 aa).

Gly-127 and Ala-128 together coordinate pyridoxal 5'-phosphate. 2-oxoglutarate is bound by residues Arg-168 and Gln-274. Arg-168 provides a ligand contact to L-lysine. Gln-274 provides a ligand contact to pyridoxal 5'-phosphate. Lys-300 carries the post-translational modification N6-(pyridoxal phosphate)lysine. Residue Arg-423 coordinates 2-oxoglutarate.

It belongs to the class-III pyridoxal-phosphate-dependent aminotransferase family. The cofactor is pyridoxal 5'-phosphate.

It carries out the reaction L-lysine + 2-oxoglutarate = (S)-2-amino-6-oxohexanoate + L-glutamate. The protein operates within antibiotic biosynthesis; cephamycin C biosynthesis. In terms of biological role, catalyzes the transfer of the terminal amino group of L-lysine to alpha-ketoglutarate to yield L-glutamate and 2-aminoadipate 6-semialdehyde ((S)-2-amino-6-oxohexanoate), which is spontaneously converted to the dehydrated form 1-piperideine 6-carboxylate. The protein is L-lysine-epsilon aminotransferase of Amycolatopsis lactamdurans (Nocardia lactamdurans).